The primary structure comprises 125 residues: MPTISQLVRKGRKSTAVKSTAPALKECPQKRGVCTVVKTTTPKKPNSALRKIARVRLTNGFEVTAYIGGVGHNLQEHSVVLIRGGRVKDLPGVRYHIVRGALDCAGVANRMQGRSKYGAKKPKQK.

Residue D89 is modified to 3-methylthioaspartic acid.

It belongs to the universal ribosomal protein uS12 family. In terms of assembly, part of the 30S ribosomal subunit. Contacts proteins S8 and S17. May interact with IF1 in the 30S initiation complex.

Its function is as follows. With S4 and S5 plays an important role in translational accuracy. Functionally, interacts with and stabilizes bases of the 16S rRNA that are involved in tRNA selection in the A site and with the mRNA backbone. Located at the interface of the 30S and 50S subunits, it traverses the body of the 30S subunit contacting proteins on the other side and probably holding the rRNA structure together. The combined cluster of proteins S8, S12 and S17 appears to hold together the shoulder and platform of the 30S subunit. The sequence is that of Small ribosomal subunit protein uS12 from Clostridium botulinum (strain Alaska E43 / Type E3).